Here is a 134-residue protein sequence, read N- to C-terminus: Profilin-3 (134 aa).

A disulfide bridge connects residues cysteine 13 and cysteine 118. Positions 84–100 (AVIRGKKGSGGITIKKT) match the Involved in PIP2 interaction motif. Threonine 114 bears the Phosphothreonine mark.

The protein belongs to the profilin family. Occurs in many kinds of cells as a complex with monomeric actin in a 1:1 ratio. In terms of processing, phosphorylated by MAP kinases.

It is found in the cytoplasm. Its subcellular location is the cytoskeleton. Binds to actin and affects the structure of the cytoskeleton. At high concentrations, profilin prevents the polymerization of actin, whereas it enhances it at low concentrations. By binding to PIP2, it inhibits the formation of IP3 and DG. The sequence is that of Profilin-3 (PRO3) from Olea europaea (Common olive).